The following is an 83-amino-acid chain: Putative defensin-like protein 111 (83 aa).

An N-terminal signal peptide occupies residues 1-24; it reads MAITKKILLPFVLTILFVISSVHC. 4 disulfides stabilise this stretch: Cys-40-Cys-80, Cys-46-Cys-69, Cys-54-Cys-78, and Cys-58-Cys-79.

The protein belongs to the DEFL family.

It is found in the secreted. This is Putative defensin-like protein 111 (LCR50) from Arabidopsis thaliana (Mouse-ear cress).